The primary structure comprises 233 residues: UPF0758 protein Rcas_0037 (233 aa).

The region spanning 107-229 (QIRSPTDAAQ…FVSMRERGLA (123 aa)) is the MPN domain. Zn(2+) is bound by residues H178, H180, and D191. A JAMM motif motif is present at residues 178 to 191 (HNHPSGDPTPSPED).

The protein belongs to the UPF0758 family.

This chain is UPF0758 protein Rcas_0037, found in Roseiflexus castenholzii (strain DSM 13941 / HLO8).